A 343-amino-acid polypeptide reads, in one-letter code: Calcium/calmodulin-dependent protein kinase type 1B (343 aa).

The 256-residue stretch at 15–270 (YEIREKLGSG…CQQALQHLWI (256 aa)) folds into the Protein kinase domain. Residues 21–29 (LGSGAFSEV) and Lys44 each bind ATP. Asp136 acts as the Proton acceptor in catalysis. Residues 290–311 (KNFARTHWKRAFNATSFLRHIR) are calmodulin-binding. Residues 314–343 (GQSPEGEEASRQCMTRHSHPGLGTSQSPKW) are disordered. Ser338 carries the phosphoserine modification.

It belongs to the protein kinase superfamily. CAMK Ser/Thr protein kinase family. CaMK subfamily. Expressed at highest levels in adult brain, and expressed in embryo. In the adult brain detected at high levels in the anterior olfactory nuclei, piriform cortex, septal nuclei, bed nuclei of the stria terminalis, hippocampal pyramidal cells, dentate granule cells, amygdala, hypothalamic nuclei, parabrachial nucleus, and nucleus of the solitary tract. Expressed at lower levels in adult ovary and heart and at very low levels in testis, lung and muscle.

The protein localises to the cytoplasm. It localises to the nucleus. It catalyses the reaction L-seryl-[protein] + ATP = O-phospho-L-seryl-[protein] + ADP + H(+). It carries out the reaction L-threonyl-[protein] + ATP = O-phospho-L-threonyl-[protein] + ADP + H(+). Activated by Ca(2+)/calmodulin. Its function is as follows. Calcium/calmodulin-dependent protein kinase belonging to a proposed calcium-triggered signaling cascade. In vitro phosphorylates CREB1 and SYN1/synapsin I. Phosphorylates and activates CAMK1. In Mus musculus (Mouse), this protein is Calcium/calmodulin-dependent protein kinase type 1B (Pnck).